The chain runs to 133 residues: ATP synthase epsilon chain (133 aa).

This sequence belongs to the ATPase epsilon chain family. In terms of assembly, F-type ATPases have 2 components, CF(1) - the catalytic core - and CF(0) - the membrane proton channel. CF(1) has five subunits: alpha(3), beta(3), gamma(1), delta(1), epsilon(1). CF(0) has three main subunits: a, b and c.

The protein localises to the cell inner membrane. In terms of biological role, produces ATP from ADP in the presence of a proton gradient across the membrane. This is ATP synthase epsilon chain from Maricaulis maris (strain MCS10) (Caulobacter maris).